We begin with the raw amino-acid sequence, 371 residues long: Aspartate-semialdehyde dehydrogenase (371 aa).

NADP(+) contacts are provided by residues 9-12, 37-38, and Gln-73; these read RGMV and TS. Arg-102 is a binding site for phosphate. The Acyl-thioester intermediate role is filled by Cys-135. Gln-162 serves as a coordination point for substrate. Residues 165–166 and Pro-193 contribute to the NADP(+) site; that span reads SG. Glu-241 is a substrate binding site. Lys-244 is a phosphate binding site. Arg-268 contacts substrate. Catalysis depends on His-275, which acts as the Proton acceptor. An NADP(+)-binding site is contributed by Gln-351.

This sequence belongs to the aspartate-semialdehyde dehydrogenase family. Homodimer.

The catalysed reaction is L-aspartate 4-semialdehyde + phosphate + NADP(+) = 4-phospho-L-aspartate + NADPH + H(+). The protein operates within amino-acid biosynthesis; L-lysine biosynthesis via DAP pathway; (S)-tetrahydrodipicolinate from L-aspartate: step 2/4. It participates in amino-acid biosynthesis; L-methionine biosynthesis via de novo pathway; L-homoserine from L-aspartate: step 2/3. Its pathway is amino-acid biosynthesis; L-threonine biosynthesis; L-threonine from L-aspartate: step 2/5. Functionally, catalyzes the NADPH-dependent formation of L-aspartate-semialdehyde (L-ASA) by the reductive dephosphorylation of L-aspartyl-4-phosphate. The protein is Aspartate-semialdehyde dehydrogenase of Neisseria meningitidis serogroup A / serotype 4A (strain DSM 15465 / Z2491).